A 116-amino-acid chain; its full sequence is Large ribosomal subunit protein uL22c (116 aa).

This sequence belongs to the universal ribosomal protein uL22 family. Part of the 50S ribosomal subunit.

The protein localises to the plastid. It is found in the chloroplast. Functionally, this protein binds specifically to 23S rRNA. Its function is as follows. The globular domain of the protein is located near the polypeptide exit tunnel on the outside of the subunit, while an extended beta-hairpin is found that lines the wall of the exit tunnel in the center of the 70S ribosome. The sequence is that of Large ribosomal subunit protein uL22c (rpl22) from Euglena gracilis.